Consider the following 213-residue polypeptide: UPF0502 protein Daro_2469 (213 aa).

The protein belongs to the UPF0502 family.

This Dechloromonas aromatica (strain RCB) protein is UPF0502 protein Daro_2469.